Here is a 176-residue protein sequence, read N- to C-terminus: HTH-type transcriptional regulator DctR (176 aa).

An HTH luxR-type domain is found at 109-174 (VPEADVSLSR…ELVRHQHINY (66 aa)). The H-T-H motif DNA-binding region spans 133-152 (TEDILEKLKISLKTFYCHKH).

In terms of biological role, may act as a transcriptional regulator of dctA. The sequence is that of HTH-type transcriptional regulator DctR (dctR) from Escherichia coli O6:H1 (strain CFT073 / ATCC 700928 / UPEC).